Consider the following 216-residue polypeptide: Endo-1,4-beta-xylanase 1 (216 aa).

A signal peptide spans methionine 1 to alanine 19. The GH11 domain maps to glutamine 29–serine 216. Glutamate 112 functions as the Nucleophile in the catalytic mechanism. Glutamate 203 functions as the Proton donor in the catalytic mechanism.

The protein belongs to the glycosyl hydrolase 11 (cellulase G) family.

The protein resides in the secreted. It carries out the reaction Endohydrolysis of (1-&gt;4)-beta-D-xylosidic linkages in xylans.. It functions in the pathway glycan degradation; xylan degradation. In terms of biological role, endo-1,4-beta-xylanase involved in the hydrolysis of xylan, a major structural heterogeneous polysaccharide found in plant biomass representing the second most abundant polysaccharide in the biosphere, after cellulose. In Claviceps purpurea (Ergot fungus), this protein is Endo-1,4-beta-xylanase 1 (xyl1).